Consider the following 249-residue polypeptide: tRNA pseudouridine synthase A (249 aa).

Asp-53 functions as the Nucleophile in the catalytic mechanism. Substrate is bound at residue Tyr-111.

The protein belongs to the tRNA pseudouridine synthase TruA family. As to quaternary structure, homodimer.

The enzyme catalyses uridine(38/39/40) in tRNA = pseudouridine(38/39/40) in tRNA. Its function is as follows. Formation of pseudouridine at positions 38, 39 and 40 in the anticodon stem and loop of transfer RNAs. The chain is tRNA pseudouridine synthase A from Streptococcus pneumoniae (strain Taiwan19F-14).